The sequence spans 319 residues: Cytochrome f (319 aa).

An N-terminal signal peptide occupies residues 1–35; sequence MFQQMQKISLKLLKTTFLFLFATFILVGLPSTSQA. The heme site is built by Tyr36, Cys56, Cys59, and His60. Residues 285–305 form a helical membrane-spanning segment; sequence IQGLIAFFISVIIAQTFLVLK.

Belongs to the cytochrome f family. The 4 large subunits of the cytochrome b6-f complex are cytochrome b6, subunit IV (17 kDa polypeptide, petD), cytochrome f and the Rieske protein, while the 4 small subunits are PetG, PetL, PetM and PetN. The complex functions as a dimer. Requires heme as cofactor.

The protein resides in the plastid. It is found in the chloroplast thylakoid membrane. Its function is as follows. Component of the cytochrome b6-f complex, which mediates electron transfer between photosystem II (PSII) and photosystem I (PSI), cyclic electron flow around PSI, and state transitions. The polypeptide is Cytochrome f (Chlorokybus atmophyticus (Soil alga)).